A 75-amino-acid chain; its full sequence is MRRDKKRSRKRVCSFCVDKIEQVDYKDVNRLRRYISERGKILPRRISGNCAHHQRQLTRAIKRARALALLPYTAE.

This sequence belongs to the bacterial ribosomal protein bS18 family. In terms of assembly, part of the 30S ribosomal subunit. Forms a tight heterodimer with protein bS6.

Its function is as follows. Binds as a heterodimer with protein bS6 to the central domain of the 16S rRNA, where it helps stabilize the platform of the 30S subunit. This chain is Small ribosomal subunit protein bS18, found in Moorella thermoacetica (strain ATCC 39073 / JCM 9320).